We begin with the raw amino-acid sequence, 392 residues long: Phospho-N-acetylmuramoyl-pentapeptide-transferase (392 aa).

The next 10 helical transmembrane spans lie at 28 to 48 (IIAA…KLIA), 76 to 96 (TMGG…FADL), 101 to 121 (VWVM…DDWL), 137 to 157 (MVLQ…TWTL), 181 to 201 (WFNP…VVGT), 213 to 233 (GLAI…CYVA), 268 to 288 (GAEL…FLWF), 295 to 315 (VFMG…LAML), 320 to 340 (VVSA…MIQV), and 369 to 389 (KIIV…LLSL).

The protein belongs to the glycosyltransferase 4 family. MraY subfamily. Mg(2+) is required as a cofactor.

The protein localises to the cell inner membrane. The catalysed reaction is UDP-N-acetyl-alpha-D-muramoyl-L-alanyl-gamma-D-glutamyl-meso-2,6-diaminopimeloyl-D-alanyl-D-alanine + di-trans,octa-cis-undecaprenyl phosphate = di-trans,octa-cis-undecaprenyl diphospho-N-acetyl-alpha-D-muramoyl-L-alanyl-D-glutamyl-meso-2,6-diaminopimeloyl-D-alanyl-D-alanine + UMP. It participates in cell wall biogenesis; peptidoglycan biosynthesis. In terms of biological role, catalyzes the initial step of the lipid cycle reactions in the biosynthesis of the cell wall peptidoglycan: transfers peptidoglycan precursor phospho-MurNAc-pentapeptide from UDP-MurNAc-pentapeptide onto the lipid carrier undecaprenyl phosphate, yielding undecaprenyl-pyrophosphoryl-MurNAc-pentapeptide, known as lipid I. The polypeptide is Phospho-N-acetylmuramoyl-pentapeptide-transferase (Myxococcus xanthus (strain DK1622)).